The chain runs to 325 residues: GMP reductase (325 aa).

The Thioimidate intermediate role is filled by C174. 203–226 (LIADGGIRTHGDIAKSIRFGATMV) contacts NADP(+).

This sequence belongs to the IMPDH/GMPR family. GuaC type 2 subfamily.

The enzyme catalyses IMP + NH4(+) + NADP(+) = GMP + NADPH + 2 H(+). Catalyzes the irreversible NADPH-dependent deamination of GMP to IMP. It functions in the conversion of nucleobase, nucleoside and nucleotide derivatives of G to A nucleotides, and in maintaining the intracellular balance of A and G nucleotides. The sequence is that of GMP reductase from Pediococcus pentosaceus (strain ATCC 25745 / CCUG 21536 / LMG 10740 / 183-1w).